Consider the following 226-residue polypeptide: uncharacterized protein (226 aa).

In terms of domain architecture, N-acetyltransferase spans 75 to 226; sequence YTIRNVTKDD…KGWLRMVKRI (152 aa).

Belongs to the acetyltransferase family.

This is an uncharacterized protein from Methanocaldococcus jannaschii (strain ATCC 43067 / DSM 2661 / JAL-1 / JCM 10045 / NBRC 100440) (Methanococcus jannaschii).